A 39-amino-acid chain; its full sequence is Photosystem II reaction center protein J (39 aa).

The chain crosses the membrane as a helical span at residues 9–29 (LWLVATVGGIAAITVLGIFIY).

It belongs to the PsbJ family. In terms of assembly, PSII is composed of 1 copy each of membrane proteins PsbA, PsbB, PsbC, PsbD, PsbE, PsbF, PsbH, PsbI, PsbJ, PsbK, PsbL, PsbM, PsbT, PsbX, PsbY, PsbZ, Psb30/Ycf12, at least 3 peripheral proteins of the oxygen-evolving complex and a large number of cofactors. It forms dimeric complexes.

It is found in the plastid. The protein localises to the chloroplast thylakoid membrane. One of the components of the core complex of photosystem II (PSII). PSII is a light-driven water:plastoquinone oxidoreductase that uses light energy to abstract electrons from H(2)O, generating O(2) and a proton gradient subsequently used for ATP formation. It consists of a core antenna complex that captures photons, and an electron transfer chain that converts photonic excitation into a charge separation. This Pyropia yezoensis (Susabi-nori) protein is Photosystem II reaction center protein J.